The following is a 332-amino-acid chain: 2,3-diketo-L-gulonate reductase (332 aa).

The active-site Proton donor is the histidine 44. Residues 168–174 (ITMVDMS), 224–225 (WK), and 304–306 (GHE) contribute to the NAD(+) site.

Belongs to the LDH2/MDH2 oxidoreductase family. DlgD subfamily. In terms of assembly, homodimer.

The protein resides in the cytoplasm. The enzyme catalyses 3-dehydro-L-gulonate + NAD(+) = 2,3-dioxo-L-gulonate + NADH + H(+). It carries out the reaction 3-dehydro-L-gulonate + NADP(+) = 2,3-dioxo-L-gulonate + NADPH + H(+). Catalyzes the reduction of 2,3-diketo-L-gulonate in the presence of NADH, to form 3-keto-L-gulonate. The protein is 2,3-diketo-L-gulonate reductase of Pasteurella multocida (strain Pm70).